The primary structure comprises 934 residues: Serine/threonine-protein kinase PknD (934 aa).

The Protein kinase domain occupies 4–296; it reads YELIRLIGKG…ELRQALQPYL (293 aa). ATP-binding positions include 10–18 and K33; that span reads IGKGGMGEV. D138 acts as the Proton acceptor in catalysis.

The protein belongs to the protein kinase superfamily. Ser/Thr protein kinase family. Interacts with Pkn1. In terms of processing, autophosphorylated on serine and threonine residues.

It carries out the reaction L-seryl-[protein] + ATP = O-phospho-L-seryl-[protein] + ADP + H(+). It catalyses the reaction L-threonyl-[protein] + ATP = O-phospho-L-threonyl-[protein] + ADP + H(+). In terms of biological role, together with the serine/threonine kinase Pkn1, may play a role in the specific interactions with host proteins during intracellular growth. Autophosphorylates and also phosphorylates Pkn1. The protein is Serine/threonine-protein kinase PknD of Chlamydia trachomatis serovar D (strain ATCC VR-885 / DSM 19411 / UW-3/Cx).